Reading from the N-terminus, the 275-residue chain is Bis(5'-nucleosyl)-tetraphosphatase, symmetrical (275 aa).

It belongs to the Ap4A hydrolase family.

It catalyses the reaction P(1),P(4)-bis(5'-adenosyl) tetraphosphate + H2O = 2 ADP + 2 H(+). Functionally, hydrolyzes diadenosine 5',5'''-P1,P4-tetraphosphate to yield ADP. This chain is Bis(5'-nucleosyl)-tetraphosphatase, symmetrical, found in Hamiltonella defensa subsp. Acyrthosiphon pisum (strain 5AT).